The primary structure comprises 432 residues: Enolase (432 aa).

Glutamine 163 is a (2R)-2-phosphoglycerate binding site. Glutamate 205 acts as the Proton donor in catalysis. Mg(2+) is bound by residues aspartate 242, glutamate 288, and aspartate 315. (2R)-2-phosphoglycerate is bound by residues lysine 340, arginine 369, serine 370, and lysine 391. Lysine 340 functions as the Proton acceptor in the catalytic mechanism.

It belongs to the enolase family. In terms of assembly, homodimer. The cofactor is Mg(2+).

The protein localises to the cytoplasm. It localises to the secreted. It is found in the cell surface. The enzyme catalyses (2R)-2-phosphoglycerate = phosphoenolpyruvate + H2O. It participates in carbohydrate degradation; glycolysis; pyruvate from D-glyceraldehyde 3-phosphate: step 4/5. The covalent binding to the substrate causes inactivation of the enzyme, and possibly serves as a signal for the export of the protein. In terms of biological role, catalyzes the reversible conversion of 2-phosphoglycerate (2-PG) into phosphoenolpyruvate (PEP). It is essential for the degradation of carbohydrates via glycolysis. This chain is Enolase, found in Enterococcus hirae.